The primary structure comprises 424 residues: Serine--tRNA ligase (424 aa).

Position 229–231 (229–231 (TAE)) interacts with L-serine. Residues 259–261 (RKE) and valine 275 contribute to the ATP site. An L-serine-binding site is contributed by glutamate 282. 349 to 352 (EVTS) contributes to the ATP binding site. Threonine 383 is an L-serine binding site.

This sequence belongs to the class-II aminoacyl-tRNA synthetase family. Type-1 seryl-tRNA synthetase subfamily. Homodimer. The tRNA molecule binds across the dimer.

The protein resides in the cytoplasm. It carries out the reaction tRNA(Ser) + L-serine + ATP = L-seryl-tRNA(Ser) + AMP + diphosphate + H(+). It catalyses the reaction tRNA(Sec) + L-serine + ATP = L-seryl-tRNA(Sec) + AMP + diphosphate + H(+). It functions in the pathway aminoacyl-tRNA biosynthesis; selenocysteinyl-tRNA(Sec) biosynthesis; L-seryl-tRNA(Sec) from L-serine and tRNA(Sec): step 1/1. Catalyzes the attachment of serine to tRNA(Ser). Is also able to aminoacylate tRNA(Sec) with serine, to form the misacylated tRNA L-seryl-tRNA(Sec), which will be further converted into selenocysteinyl-tRNA(Sec). The sequence is that of Serine--tRNA ligase from Borrelia recurrentis (strain A1).